Reading from the N-terminus, the 705-residue chain is Elongation factor G (705 aa).

The 287-residue stretch at 8–294 (ELCRNFGIMA…SVIDYLPSPL (287 aa)) folds into the tr-type G domain. Residues 17-24 (AHIDAGKT), 92-96 (DTPGH), and 146-149 (NKMD) each bind GTP.

Belongs to the TRAFAC class translation factor GTPase superfamily. Classic translation factor GTPase family. EF-G/EF-2 subfamily.

The protein localises to the cytoplasm. Functionally, catalyzes the GTP-dependent ribosomal translocation step during translation elongation. During this step, the ribosome changes from the pre-translocational (PRE) to the post-translocational (POST) state as the newly formed A-site-bound peptidyl-tRNA and P-site-bound deacylated tRNA move to the P and E sites, respectively. Catalyzes the coordinated movement of the two tRNA molecules, the mRNA and conformational changes in the ribosome. This is Elongation factor G from Cereibacter sphaeroides (strain ATCC 17023 / DSM 158 / JCM 6121 / CCUG 31486 / LMG 2827 / NBRC 12203 / NCIMB 8253 / ATH 2.4.1.) (Rhodobacter sphaeroides).